The sequence spans 491 residues: Aspartyl/glutamyl-tRNA(Asn/Gln) amidotransferase subunit B (491 aa).

It belongs to the GatB/GatE family. GatB subfamily. Heterotrimer of A, B and C subunits.

The enzyme catalyses L-glutamyl-tRNA(Gln) + L-glutamine + ATP + H2O = L-glutaminyl-tRNA(Gln) + L-glutamate + ADP + phosphate + H(+). It carries out the reaction L-aspartyl-tRNA(Asn) + L-glutamine + ATP + H2O = L-asparaginyl-tRNA(Asn) + L-glutamate + ADP + phosphate + 2 H(+). Allows the formation of correctly charged Asn-tRNA(Asn) or Gln-tRNA(Gln) through the transamidation of misacylated Asp-tRNA(Asn) or Glu-tRNA(Gln) in organisms which lack either or both of asparaginyl-tRNA or glutaminyl-tRNA synthetases. The reaction takes place in the presence of glutamine and ATP through an activated phospho-Asp-tRNA(Asn) or phospho-Glu-tRNA(Gln). This is Aspartyl/glutamyl-tRNA(Asn/Gln) amidotransferase subunit B from Burkholderia multivorans (strain ATCC 17616 / 249).